Consider the following 478-residue polypeptide: Protein nucleotidyltransferase YdiU (478 aa).

The ATP site is built by Gly84, Gly86, Arg87, Lys107, Asp119, Gly120, Arg170, and Arg177. The active-site Proton acceptor is Asp246. The Mg(2+) site is built by Asn247 and Asp256. Asp256 is an ATP binding site.

The protein belongs to the SELO family. Requires Mg(2+) as cofactor. Mn(2+) is required as a cofactor.

It carries out the reaction L-seryl-[protein] + ATP = 3-O-(5'-adenylyl)-L-seryl-[protein] + diphosphate. It catalyses the reaction L-threonyl-[protein] + ATP = 3-O-(5'-adenylyl)-L-threonyl-[protein] + diphosphate. The enzyme catalyses L-tyrosyl-[protein] + ATP = O-(5'-adenylyl)-L-tyrosyl-[protein] + diphosphate. The catalysed reaction is L-histidyl-[protein] + UTP = N(tele)-(5'-uridylyl)-L-histidyl-[protein] + diphosphate. It carries out the reaction L-seryl-[protein] + UTP = O-(5'-uridylyl)-L-seryl-[protein] + diphosphate. It catalyses the reaction L-tyrosyl-[protein] + UTP = O-(5'-uridylyl)-L-tyrosyl-[protein] + diphosphate. Nucleotidyltransferase involved in the post-translational modification of proteins. It can catalyze the addition of adenosine monophosphate (AMP) or uridine monophosphate (UMP) to a protein, resulting in modifications known as AMPylation and UMPylation. This chain is Protein nucleotidyltransferase YdiU, found in Escherichia coli O7:K1 (strain IAI39 / ExPEC).